The following is a 394-amino-acid chain: Arogenate dehydratase 2 (394 aa).

The disordered stretch occupies residues 1–24 (MAATTTLRSPKIPHPPPESTPSNL). The transit peptide at 1-47 (MAATTTLRSPKIPHPPPESTPSNLSYLSQISLTPVPKRRRFISIYAC) directs the protein to the chloroplast. A Prephenate dehydratase domain is found at 108–283 (RVAYQGVRGA…NVTRFLMLAR (176 aa)). In terms of domain architecture, ACT spans 297–388 (SVVFSLDEGP…TFLRVLGSYP (92 aa)).

In terms of tissue distribution, expressed at low levels in petals (corollas and tubes), stems, leaves, pistils, stamens, ovaries and sepals.

It is found in the plastid. The protein resides in the chloroplast stroma. It carries out the reaction prephenate + H(+) = 3-phenylpyruvate + CO2 + H2O. The enzyme catalyses L-arogenate + H(+) = L-phenylalanine + CO2 + H2O. The protein operates within amino-acid biosynthesis; L-phenylalanine biosynthesis; L-phenylalanine from L-arogenate: step 1/1. In terms of biological role, converts the prephenate and L-arogenate produced from the shikimate-chorismate pathway into 3-phenylpyruvate and phenylalanine (Phe), respectively. Involved in floral volatile benzenoids and phenylpropanoids (FVBP) production. This chain is Arogenate dehydratase 2, found in Petunia hybrida (Petunia).